We begin with the raw amino-acid sequence, 575 residues long: Proline--tRNA ligase 1 (575 aa).

Belongs to the class-II aminoacyl-tRNA synthetase family. ProS type 1 subfamily. As to quaternary structure, homodimer.

Its subcellular location is the cytoplasm. The enzyme catalyses tRNA(Pro) + L-proline + ATP = L-prolyl-tRNA(Pro) + AMP + diphosphate. Functionally, catalyzes the attachment of proline to tRNA(Pro) in a two-step reaction: proline is first activated by ATP to form Pro-AMP and then transferred to the acceptor end of tRNA(Pro). As ProRS can inadvertently accommodate and process non-cognate amino acids such as alanine and cysteine, to avoid such errors it has two additional distinct editing activities against alanine. One activity is designated as 'pretransfer' editing and involves the tRNA(Pro)-independent hydrolysis of activated Ala-AMP. The other activity is designated 'posttransfer' editing and involves deacylation of mischarged Ala-tRNA(Pro). The misacylated Cys-tRNA(Pro) is not edited by ProRS. The protein is Proline--tRNA ligase 1 of Anaeromyxobacter dehalogenans (strain 2CP-C).